A 198-amino-acid chain; its full sequence is Recombination protein RecR (198 aa).

A C4-type zinc finger spans residues 58–73; it reads CSICGNFTDSDPCAIC. Residues 81–175 enclose the Toprim domain; sequence SIICVIEEPK…KVTRIAHGIP (95 aa).

The protein belongs to the RecR family.

May play a role in DNA repair. It seems to be involved in an RecBC-independent recombinational process of DNA repair. It may act with RecF and RecO. The protein is Recombination protein RecR of Clostridium kluyveri (strain NBRC 12016).